Consider the following 181-residue polypeptide: Crossover junction endodeoxyribonuclease RuvC (181 aa).

Catalysis depends on residues aspartate 8, glutamate 67, and aspartate 139. Residues aspartate 8, glutamate 67, and aspartate 139 each coordinate Mg(2+).

This sequence belongs to the RuvC family. As to quaternary structure, homodimer which binds Holliday junction (HJ) DNA. The HJ becomes 2-fold symmetrical on binding to RuvC with unstacked arms; it has a different conformation from HJ DNA in complex with RuvA. In the full resolvosome a probable DNA-RuvA(4)-RuvB(12)-RuvC(2) complex forms which resolves the HJ. Mg(2+) serves as cofactor.

Its subcellular location is the cytoplasm. It catalyses the reaction Endonucleolytic cleavage at a junction such as a reciprocal single-stranded crossover between two homologous DNA duplexes (Holliday junction).. Functionally, the RuvA-RuvB-RuvC complex processes Holliday junction (HJ) DNA during genetic recombination and DNA repair. Endonuclease that resolves HJ intermediates. Cleaves cruciform DNA by making single-stranded nicks across the HJ at symmetrical positions within the homologous arms, yielding a 5'-phosphate and a 3'-hydroxyl group; requires a central core of homology in the junction. The consensus cleavage sequence is 5'-(A/T)TT(C/G)-3'. Cleavage occurs on the 3'-side of the TT dinucleotide at the point of strand exchange. HJ branch migration catalyzed by RuvA-RuvB allows RuvC to scan DNA until it finds its consensus sequence, where it cleaves and resolves the cruciform DNA. The polypeptide is Crossover junction endodeoxyribonuclease RuvC (Acinetobacter baumannii (strain SDF)).